A 107-amino-acid chain; its full sequence is Phosphoribosyl-ATP pyrophosphatase (107 aa).

The protein belongs to the PRA-PH family.

It is found in the cytoplasm. The enzyme catalyses 1-(5-phospho-beta-D-ribosyl)-ATP + H2O = 1-(5-phospho-beta-D-ribosyl)-5'-AMP + diphosphate + H(+). Its pathway is amino-acid biosynthesis; L-histidine biosynthesis; L-histidine from 5-phospho-alpha-D-ribose 1-diphosphate: step 2/9. The protein is Phosphoribosyl-ATP pyrophosphatase of Sinorhizobium medicae (strain WSM419) (Ensifer medicae).